A 95-amino-acid chain; its full sequence is Large ribosomal subunit protein uL23 (95 aa).

This sequence belongs to the universal ribosomal protein uL23 family. As to quaternary structure, part of the 50S ribosomal subunit. Contacts protein L29, and trigger factor when it is bound to the ribosome.

One of the early assembly proteins it binds 23S rRNA. One of the proteins that surrounds the polypeptide exit tunnel on the outside of the ribosome. Forms the main docking site for trigger factor binding to the ribosome. The sequence is that of Large ribosomal subunit protein uL23 from Rubrobacter xylanophilus (strain DSM 9941 / JCM 11954 / NBRC 16129 / PRD-1).